The following is a 383-amino-acid chain: Non-structural maintenance of chromosomes element 4 homolog B (383 aa).

Residues 1–22 (MRNSVKWETELTGDRSRRREAD) are compositionally biased toward basic and acidic residues. Disordered stretches follow at residues 1-59 (MRNS…EQGI), 198-231 (MKQRKSRVGNRKRTKPGAGVKPEEVDDTEAEKKS), and 355-383 (QGSVIQEETVVEDSSNMEGDNEDSKNGGL). Residues 201–212 (RKSRVGNRKRTK) show a composition bias toward basic residues. A compositionally biased stretch (polar residues) spans 355–372 (QGSVIQEETVVEDSSNME).

It belongs to the NSE4 family. Interacts with SMC5, SMC6A or SMC6B. The SMC5-SMC6 complex is composed of the SMC5 and SMC6 heterodimer attached via their hinge domain and from the non-SMC subunit NSE4A or NSE4B. In terms of tissue distribution, not expressed in seedlings, rosette leaves and floral buds.

The protein resides in the nucleus. In terms of biological role, component of the SMC5-SMC6 complex, that promotes sister chromatid alignment after DNA damage and facilitates double-stranded DNA breaks (DSBs) repair via homologous recombination between sister chromatids. This chain is Non-structural maintenance of chromosomes element 4 homolog B (NSE4B), found in Arabidopsis thaliana (Mouse-ear cress).